We begin with the raw amino-acid sequence, 211 residues long: 3-demethoxyubiquinol 3-hydroxylase (211 aa).

The segment at lysine 22–aspartate 43 is disordered. Residues asparagine 28 to serine 42 are compositionally biased toward polar residues. Fe cation is bound by residues glutamate 60, glutamate 90, histidine 93, glutamate 142, glutamate 174, and histidine 177.

It belongs to the COQ7 family. It depends on Fe cation as a cofactor.

It localises to the cell membrane. It carries out the reaction a 5-methoxy-2-methyl-3-(all-trans-polyprenyl)benzene-1,4-diol + AH2 + O2 = a 3-demethylubiquinol + A + H2O. Its pathway is cofactor biosynthesis; ubiquinone biosynthesis. Its function is as follows. Catalyzes the hydroxylation of 2-nonaprenyl-3-methyl-6-methoxy-1,4-benzoquinol during ubiquinone biosynthesis. This chain is 3-demethoxyubiquinol 3-hydroxylase, found in Francisella philomiragia subsp. philomiragia (strain ATCC 25017 / CCUG 19701 / FSC 153 / O#319-036).